The chain runs to 707 residues: DNA-binding protein RFX2 (707 aa).

Serine 33 carries the post-translational modification Phosphoserine. The RFX-type winged-helix DNA-binding region spans 204–279 (HLQWLLDNYE…YHYYGIRLKP (76 aa)). The interval 297 to 337 (QQPVHQKPRYRPAQKTDSLGESGSHSSLHSTPEQAMAAQSQ) is disordered. The span at 315–337 (LGESGSHSSLHSTPEQAMAAQSQ) shows a compositional bias: low complexity. A Phosphoserine modification is found at serine 420.

Belongs to the RFX family. Homodimer; probably only forms homodimers in testis. Heterodimer; heterodimerizes with RFX1 and RFX3.

It is found in the nucleus. The protein localises to the cytoplasm. Functionally, transcription factor that acts as a key regulator of spermatogenesis. Acts by regulating expression of genes required for the haploid phase during spermiogenesis, such as genes required for cilium assembly and function. Recognizes and binds the X-box, a regulatory motif with DNA sequence 5'-GTNRCC(0-3N)RGYAAC-3' present on promoters. Probably activates transcription of the testis-specific histone gene H1-6. In Bos taurus (Bovine), this protein is DNA-binding protein RFX2 (RFX2).